The chain runs to 20 residues: Bulb protein (20 aa).

A disordered region spans residues 1–20 (APDVHTRXTQNGLPPGXLPS).

The chain is Bulb protein from Narcissus pseudonarcissus (Daffodil).